The sequence spans 294 residues: Small ribosomal subunit protein uS2 (294 aa).

The segment covering 261-274 (MDEDADSKKSKAEE) has biased composition (basic and acidic residues). A disordered region spans residues 261-294 (MDEDADSKKSKAEEPVIPTAEEPAITTIEVDQNE).

It belongs to the universal ribosomal protein uS2 family.

In Leptospira borgpetersenii serovar Hardjo-bovis (strain JB197), this protein is Small ribosomal subunit protein uS2.